Consider the following 669-residue polypeptide: Dymeclin (669 aa).

A lipid anchor (N-myristoyl glycine) is attached at Gly2.

It belongs to the dymeclin family. Interacts with GOLM1 and PPIB. Post-translationally, myristoylated in vitro; myristoylation is not essential for protein targeting to Golgi compartment.

The protein resides in the cytoplasm. The protein localises to the golgi apparatus. Its subcellular location is the membrane. Functionally, necessary for correct organization of Golgi apparatus. Involved in bone development. The protein is Dymeclin (DYM) of Pongo abelii (Sumatran orangutan).